We begin with the raw amino-acid sequence, 166 residues long: Large ribosomal subunit protein uL10 (166 aa).

It belongs to the universal ribosomal protein uL10 family. Part of the ribosomal stalk of the 50S ribosomal subunit. The N-terminus interacts with L11 and the large rRNA to form the base of the stalk. The C-terminus forms an elongated spine to which L12 dimers bind in a sequential fashion forming a multimeric L10(L12)X complex.

Forms part of the ribosomal stalk, playing a central role in the interaction of the ribosome with GTP-bound translation factors. The polypeptide is Large ribosomal subunit protein uL10 (Pseudomonas fluorescens (strain SBW25)).